Consider the following 321-residue polypeptide: Peroxidase 27 (321 aa).

The first 23 residues, 1 to 23 (MAASKRLVVSCLFLVLLFAQANS), serve as a signal peptide directing secretion. 4 disulfide bridges follow: cysteine 35–cysteine 113, cysteine 68–cysteine 73, cysteine 119–cysteine 317, and cysteine 196–cysteine 228. Residue histidine 66 is the Proton acceptor of the active site. Ca(2+) is bound by residues aspartate 67, valine 70, glycine 72, aspartate 74, and serine 76. Proline 159 is a binding site for substrate. The N-linked (GlcNAc...) asparagine glycan is linked to asparagine 164. Histidine 189 provides a ligand contact to heme b. Threonine 190 is a binding site for Ca(2+). A glycan (N-linked (GlcNAc...) asparagine) is linked at asparagine 205. Residues aspartate 240, serine 243, and aspartate 248 each coordinate Ca(2+).

The protein belongs to the peroxidase family. Classical plant (class III) peroxidase subfamily. The cofactor is heme b. Requires Ca(2+) as cofactor. Expressed in the whole plant, but preferentially in roots and flowers.

Its subcellular location is the secreted. It carries out the reaction 2 a phenolic donor + H2O2 = 2 a phenolic radical donor + 2 H2O. In terms of biological role, removal of H(2)O(2), oxidation of toxic reductants, biosynthesis and degradation of lignin, suberization, auxin catabolism, response to environmental stresses such as wounding, pathogen attack and oxidative stress. These functions might be dependent on each isozyme/isoform in each plant tissue. This is Peroxidase 27 (PER27) from Arabidopsis thaliana (Mouse-ear cress).